Consider the following 407-residue polypeptide: 1-deoxy-D-xylulose 5-phosphate reductoisomerase (407 aa).

Threonine 25, glycine 26, serine 27, isoleucine 28, asparagine 53, and asparagine 136 together coordinate NADPH. Residue lysine 137 participates in 1-deoxy-D-xylulose 5-phosphate binding. NADPH is bound at residue glutamate 138. Position 162 (aspartate 162) interacts with Mn(2+). 1-deoxy-D-xylulose 5-phosphate contacts are provided by serine 163, glutamate 164, serine 188, and histidine 211. Glutamate 164 is a Mn(2+) binding site. Glycine 217 serves as a coordination point for NADPH. Positions 224, 229, 230, and 233 each coordinate 1-deoxy-D-xylulose 5-phosphate. Mn(2+) is bound at residue glutamate 233.

This sequence belongs to the DXR family. The cofactor is Mg(2+). Mn(2+) is required as a cofactor.

It catalyses the reaction 2-C-methyl-D-erythritol 4-phosphate + NADP(+) = 1-deoxy-D-xylulose 5-phosphate + NADPH + H(+). The protein operates within isoprenoid biosynthesis; isopentenyl diphosphate biosynthesis via DXP pathway; isopentenyl diphosphate from 1-deoxy-D-xylulose 5-phosphate: step 1/6. Its function is as follows. Catalyzes the NADPH-dependent rearrangement and reduction of 1-deoxy-D-xylulose-5-phosphate (DXP) to 2-C-methyl-D-erythritol 4-phosphate (MEP). This Afipia carboxidovorans (strain ATCC 49405 / DSM 1227 / KCTC 32145 / OM5) (Oligotropha carboxidovorans) protein is 1-deoxy-D-xylulose 5-phosphate reductoisomerase.